The primary structure comprises 199 residues: Holliday junction branch migration complex subunit RuvA (199 aa).

The segment at 1 to 64 (MIALLTGKLA…EDAINLYGFR (64 aa)) is domain I. The domain II stretch occupies residues 65-143 (TMEEKEMFQL…KLGHGPLQQD (79 aa)). Residues 144 to 148 (VAPAD) form a flexible linker region. The segment at 149–199 (AHNDMRDDVVSALVNLGYKEAVVQKTVDEIGVAADATVESLLKQALKKLMK) is domain III.

Belongs to the RuvA family. As to quaternary structure, homotetramer. Forms an RuvA(8)-RuvB(12)-Holliday junction (HJ) complex. HJ DNA is sandwiched between 2 RuvA tetramers; dsDNA enters through RuvA and exits via RuvB. An RuvB hexamer assembles on each DNA strand where it exits the tetramer. Each RuvB hexamer is contacted by two RuvA subunits (via domain III) on 2 adjacent RuvB subunits; this complex drives branch migration. In the full resolvosome a probable DNA-RuvA(4)-RuvB(12)-RuvC(2) complex forms which resolves the HJ.

It localises to the cytoplasm. The RuvA-RuvB-RuvC complex processes Holliday junction (HJ) DNA during genetic recombination and DNA repair, while the RuvA-RuvB complex plays an important role in the rescue of blocked DNA replication forks via replication fork reversal (RFR). RuvA specifically binds to HJ cruciform DNA, conferring on it an open structure. The RuvB hexamer acts as an ATP-dependent pump, pulling dsDNA into and through the RuvAB complex. HJ branch migration allows RuvC to scan DNA until it finds its consensus sequence, where it cleaves and resolves the cruciform DNA. This Geotalea daltonii (strain DSM 22248 / JCM 15807 / FRC-32) (Geobacter daltonii) protein is Holliday junction branch migration complex subunit RuvA.